The following is a 304-amino-acid chain: Recombination-associated protein RdgC (304 aa).

The protein belongs to the RdgC family.

Its subcellular location is the cytoplasm. The protein localises to the nucleoid. Its function is as follows. May be involved in recombination. The sequence is that of Recombination-associated protein RdgC from Shewanella sp. (strain MR-4).